Here is a 278-residue protein sequence, read N- to C-terminus: 4-deoxy-L-threo-5-hexosulose-uronate ketol-isomerase (278 aa).

Residues histidine 196, histidine 198, glutamate 203, and histidine 245 each coordinate Zn(2+).

It belongs to the KduI family. Zn(2+) serves as cofactor.

It catalyses the reaction 5-dehydro-4-deoxy-D-glucuronate = 3-deoxy-D-glycero-2,5-hexodiulosonate. It participates in glycan metabolism; pectin degradation; 2-dehydro-3-deoxy-D-gluconate from pectin: step 4/5. Its function is as follows. Catalyzes the isomerization of 5-dehydro-4-deoxy-D-glucuronate to 3-deoxy-D-glycero-2,5-hexodiulosonate. This Paraburkholderia phytofirmans (strain DSM 17436 / LMG 22146 / PsJN) (Burkholderia phytofirmans) protein is 4-deoxy-L-threo-5-hexosulose-uronate ketol-isomerase.